Consider the following 261-residue polypeptide: Phosphatidylglycerol--prolipoprotein diacylglyceryl transferase (261 aa).

The next 4 membrane-spanning stretches (helical) occupy residues 17-37 (FGIH…LWLG), 60-80 (ALFY…ALFY), 92-112 (ILFL…VMVA), and 121-141 (GLTF…GLGA). Residue Arg143 coordinates a 1,2-diacyl-sn-glycero-3-phospho-(1'-sn-glycerol). The next 3 membrane-spanning stretches (helical) occupy residues 175-195 (PSQL…LWWY), 203-223 (GSVS…VEFT), and 237-257 (LSMG…LLIV).

This sequence belongs to the Lgt family.

It localises to the cell inner membrane. The enzyme catalyses L-cysteinyl-[prolipoprotein] + a 1,2-diacyl-sn-glycero-3-phospho-(1'-sn-glycerol) = an S-1,2-diacyl-sn-glyceryl-L-cysteinyl-[prolipoprotein] + sn-glycerol 1-phosphate + H(+). Its pathway is protein modification; lipoprotein biosynthesis (diacylglyceryl transfer). Functionally, catalyzes the transfer of the diacylglyceryl group from phosphatidylglycerol to the sulfhydryl group of the N-terminal cysteine of a prolipoprotein, the first step in the formation of mature lipoproteins. This is Phosphatidylglycerol--prolipoprotein diacylglyceryl transferase from Methylobacillus flagellatus (strain ATCC 51484 / DSM 6875 / VKM B-1610 / KT).